Consider the following 299-residue polypeptide: Virginiamycin B lyase (299 aa).

His-229 is a substrate binding site. Position 269 (Glu-269) interacts with Mg(2+). The active-site Proton acceptor is the His-271. Glu-286 provides a ligand contact to Mg(2+).

This sequence belongs to the Vgb family. In terms of assembly, monomer. Mg(2+) serves as cofactor.

Its function is as follows. Inactivates the type B streptogramin antibiotics by linearizing the lactone ring at the ester linkage, generating a free phenylglycine carboxylate and converting the threonyl moiety into 2-amino-butenoic acid. This chain is Virginiamycin B lyase (vgb), found in Bordetella pertussis (strain Tohama I / ATCC BAA-589 / NCTC 13251).